The primary structure comprises 180 residues: Large ribosomal subunit protein uL5c (180 aa).

Belongs to the universal ribosomal protein uL5 family. Part of the 50S ribosomal subunit; contacts the 5S rRNA.

The protein resides in the plastid. Its subcellular location is the chloroplast. Its function is as follows. Binds 5S rRNA, forms part of the central protuberance of the 50S subunit. The sequence is that of Large ribosomal subunit protein uL5c (rpl5) from Stigeoclonium helveticum (Green alga).